A 536-amino-acid chain; its full sequence is Chaperonin GroEL (536 aa).

ATP is bound by residues 29-32, 86-90, glycine 413, 476-478, and aspartate 492; these read TLGP, DGTTT, and DAA.

Belongs to the chaperonin (HSP60) family. As to quaternary structure, forms a cylinder of 14 subunits composed of two heptameric rings stacked back-to-back. Interacts with the co-chaperonin GroES.

Its subcellular location is the cytoplasm. It catalyses the reaction ATP + H2O + a folded polypeptide = ADP + phosphate + an unfolded polypeptide.. Together with its co-chaperonin GroES, plays an essential role in assisting protein folding. The GroEL-GroES system forms a nano-cage that allows encapsulation of the non-native substrate proteins and provides a physical environment optimized to promote and accelerate protein folding. The sequence is that of Chaperonin GroEL from Methanococcus vannielii (strain ATCC 35089 / DSM 1224 / JCM 13029 / OCM 148 / SB).